The following is a 215-amino-acid chain: Adenylate kinase (215 aa).

10-15 lines the ATP pocket; the sequence is GAGKGT. An NMP region spans residues 30-58; that stretch reads STGDMLREAKRSGTLEKRYLDIMDSGGLL. AMP contacts are provided by residues Thr31, Arg36, 56-58, 84-87, and Gln91; these read GLL and GFPR. An LID region spans residues 128–158; the sequence is HRRTDKRSGQIYHLVYNPPPPGAELEHRADD. Residues Arg129 and 138–139 contribute to the ATP site; that span reads IY. AMP-binding residues include Arg155 and Arg166. Gly194 contacts ATP.

Belongs to the adenylate kinase family. In terms of assembly, monomer.

The protein localises to the cytoplasm. It catalyses the reaction AMP + ATP = 2 ADP. Its pathway is purine metabolism; AMP biosynthesis via salvage pathway; AMP from ADP: step 1/1. In terms of biological role, catalyzes the reversible transfer of the terminal phosphate group between ATP and AMP. Plays an important role in cellular energy homeostasis and in adenine nucleotide metabolism. This Sorangium cellulosum (strain So ce56) (Polyangium cellulosum (strain So ce56)) protein is Adenylate kinase.